Consider the following 415-residue polypeptide: Gamma-glutamyl phosphate reductase (415 aa).

The protein belongs to the gamma-glutamyl phosphate reductase family.

The protein localises to the cytoplasm. It carries out the reaction L-glutamate 5-semialdehyde + phosphate + NADP(+) = L-glutamyl 5-phosphate + NADPH + H(+). The protein operates within amino-acid biosynthesis; L-proline biosynthesis; L-glutamate 5-semialdehyde from L-glutamate: step 2/2. Its function is as follows. Catalyzes the NADPH-dependent reduction of L-glutamate 5-phosphate into L-glutamate 5-semialdehyde and phosphate. The product spontaneously undergoes cyclization to form 1-pyrroline-5-carboxylate. This chain is Gamma-glutamyl phosphate reductase, found in Bacillus cereus (strain B4264).